A 185-amino-acid chain; its full sequence is Elongation factor P (185 aa).

Belongs to the elongation factor P family.

The protein localises to the cytoplasm. Its pathway is protein biosynthesis; polypeptide chain elongation. Involved in peptide bond synthesis. Stimulates efficient translation and peptide-bond synthesis on native or reconstituted 70S ribosomes in vitro. Probably functions indirectly by altering the affinity of the ribosome for aminoacyl-tRNA, thus increasing their reactivity as acceptors for peptidyl transferase. The sequence is that of Elongation factor P from Clostridium perfringens (strain ATCC 13124 / DSM 756 / JCM 1290 / NCIMB 6125 / NCTC 8237 / Type A).